The following is an 802-amino-acid chain: Endoplasmin (802 aa).

Residues 1–21 (MRVLWVLGLCCVLLTFGFVRA) form the signal peptide. The short motif at 42–44 (SRT) is the SRT pseudosubstrate motif element. Residue Asn-62 is glycosylated (N-linked (GlcNAc...) asparagine). Ser-64 carries the post-translational modification Phosphoserine. N-linked (GlcNAc...) asparagine glycosylation occurs at Asn-107. Residues Asn-107, Asp-149, and Asn-162 each contribute to the ATP site. Lys-168 is subject to N6-(2-hydroxyisobutyryl)lysine. Residue Ser-172 is modified to Phosphoserine. Phe-199 lines the ATP pocket. N-linked (GlcNAc...) asparagine glycosylation occurs at Asn-217. Acidic residues predominate over residues 290-317 (EEPLEEDEAAKEEKEESDDEAAVEEEEE). The disordered stretch occupies residues 290-323 (EEPLEEDEAAKEEKEESDDEAAVEEEEEEKKPKT). Phosphoserine occurs at positions 306 and 403. Residue Lys-404 is modified to N6-succinyllysine. N-linked (GlcNAc...) asparagine glycosylation occurs at Asn-445. Ser-447 carries the post-translational modification Phosphoserine. Position 479 is an N6-acetyllysine (Lys-479). Residues Asn-481 and Asn-502 are each glycosylated (N-linked (GlcNAc...) asparagine). At Lys-633 the chain carries N6-succinyllysine. Residues 749 to 802 (IDPEAQVEEEPEEEPEDTSEDAEDSEQDEGEEMDAGTEEEEEETEKESTEKDEL) form a disordered region. A compositionally biased stretch (acidic residues) spans 753 to 793 (AQVEEEPEEEPEDTSEDAEDSEQDEGEEMDAGTEEEEEETE). Thr-785 is subject to Phosphothreonine. The short motif at 799–802 (KDEL) is the Prevents secretion from ER element.

Belongs to the heat shock protein 90 family. In terms of assembly, homodimer; disulfide-linked. Component of an EIF2 complex at least composed of CELF1/CUGBP1, CALR, CALR3, EIF2S1, EIF2S2, HSP90B1 and HSPA5. Part of a large chaperone multiprotein complex comprising DNAJB11, HSP90B1, HSPA5, HYOU, PDIA2, PDIA4, PDIA6, PPIB, SDF2L1, UGGT1 and very small amounts of ERP29, but not, or at very low levels, CALR nor CANX. Hyperglycosylated form interacts with OS9; promoting its degradation by the endoplasmic reticulum associated degradation (ERAD). Interacts with AIMP1; regulates its retention in the endoplasmic reticulum. Interacts with CNPY3; this interaction is disrupted in the presence of ATP. Interacts with TLR4, TLR9 and TLR11, but not with TLR3. Interacts with MZB1 in a calcium-dependent manner. Interacts with METTL23. Interacts with IL1B; the interaction facilitates cargo translocation into the ERGIC. Interacts with EIF2AK3. Post-translationally, phosphorylated by CK2. In terms of processing, N-glycosylated cotranslationally at Asn-217 by STT3A-containing OST-A complex: this glycosylation is constitutive. In response to various stress, 5 additional facultative sites (Asn-62, Asn-107, Asn-445, Asn-481 and Asn-502) can be glycosylated post-translationally by STT3B-containing OST-B complex, leading to a hyperglycosylated form that is degraded by the ER-associated degradation (ERAD) pathway. In normal conditions, the OST-A complex together with CCDC134 prevent glycosylation at facultative sites during protein folding, thereby preventing hyperglycosylation. Mechanistically, nascent HSP90B1 is tethered during translation to a specialized CCDC134-containing translocon that forms a microenvironment for its folding, in which STT3A associates with the SRT pseudosubstrate motif, and prevents access to facultative glycosylation sites until folding is completed, rendering its facultative sites inaccessible to the OST-B complex.

Its subcellular location is the endoplasmic reticulum lumen. The protein localises to the sarcoplasmic reticulum lumen. It is found in the melanosome. It carries out the reaction ATP + H2O = ADP + phosphate + H(+). Its function is as follows. ATP-dependent chaperone involved in the processing of proteins in the endoplasmic reticulum, regulating their transport. Together with MESD, acts as a modulator of the Wnt pathway by promoting the folding of LRP6, a coreceptor of the canonical Wnt pathway. When associated with CNPY3, required for proper folding of Toll-like receptors. Promotes folding and trafficking of TLR4 to the cell surface. May participate in the unfolding of cytosolic leaderless cargos (lacking the secretion signal sequence) such as the interleukin 1/IL-1 to facilitate their translocation into the ERGIC (endoplasmic reticulum-Golgi intermediate compartment) and secretion; the translocation process is mediated by the cargo receptor TMED10. The sequence is that of Endoplasmin (Hsp90b1) from Mus musculus (Mouse).